The following is a 354-amino-acid chain: Uroporphyrinogen decarboxylase (354 aa).

Residues 27-31 (RQAGR), phenylalanine 46, aspartate 77, tyrosine 154, threonine 209, and histidine 327 each bind substrate.

The protein belongs to the uroporphyrinogen decarboxylase family. Homodimer.

It is found in the cytoplasm. It catalyses the reaction uroporphyrinogen III + 4 H(+) = coproporphyrinogen III + 4 CO2. It participates in porphyrin-containing compound metabolism; protoporphyrin-IX biosynthesis; coproporphyrinogen-III from 5-aminolevulinate: step 4/4. Catalyzes the decarboxylation of four acetate groups of uroporphyrinogen-III to yield coproporphyrinogen-III. This is Uroporphyrinogen decarboxylase from Photorhabdus laumondii subsp. laumondii (strain DSM 15139 / CIP 105565 / TT01) (Photorhabdus luminescens subsp. laumondii).